Consider the following 197-residue polypeptide: Probable GTP-binding protein EngB (197 aa).

The EngB-type G domain occupies 26–197 (DLPEIALAGR…TSWDAILESL (172 aa)). GTP contacts are provided by residues 34–41 (GRSNVGKS), 61–65 (GKTQS), 79–82 (DVPG), 146–149 (TKAD), and 178–180 (FSS). Mg(2+) is bound by residues Ser41 and Thr63.

It belongs to the TRAFAC class TrmE-Era-EngA-EngB-Septin-like GTPase superfamily. EngB GTPase family. Requires Mg(2+) as cofactor.

In terms of biological role, necessary for normal cell division and for the maintenance of normal septation. The sequence is that of Probable GTP-binding protein EngB from Streptococcus mutans serotype c (strain ATCC 700610 / UA159).